A 385-amino-acid chain; its full sequence is Probable threonine protease PRSS50 (385 aa).

Positions methionine 1–glycine 39 are cleaved as a signal peptide. A Peptidase S1 domain is found at valine 93–asparagine 358. Asparagine 133 carries an N-linked (GlcNAc...) asparagine glycan. Cysteines 138 and 154 form a disulfide. Residues histidine 153 and aspartate 206 each act as charge relay system in the active site. Cystine bridges form between cysteine 240–cysteine 316, cysteine 273–cysteine 296, and cysteine 306–cysteine 334. Asparagine 279 is a glycosylation site (N-linked (GlcNAc...) asparagine). Threonine 310 functions as the Charge relay system in the catalytic mechanism.

This sequence belongs to the peptidase S1 family. In terms of tissue distribution, testis specific. Differentially expressed in some breast cancer tissues.

It is found in the endoplasmic reticulum. In terms of biological role, may be involved in proteolysis through its threonine endopeptidase activity. The chain is Probable threonine protease PRSS50 (PRSS50) from Homo sapiens (Human).